The chain runs to 395 residues: 1-deoxy-D-xylulose 5-phosphate reductoisomerase (395 aa).

Residues Thr10, Gly11, Ser12, Ile13, Lys37, and Asn123 each coordinate NADPH. Lys124 lines the 1-deoxy-D-xylulose 5-phosphate pocket. NADPH is bound at residue Glu125. Asp149 contributes to the Mn(2+) binding site. Residues Ser150, Glu151, Ser185, and His208 each contribute to the 1-deoxy-D-xylulose 5-phosphate site. Mn(2+) is bound at residue Glu151. An NADPH-binding site is contributed by Gly214. Residues Ser221, Asn226, Lys227, and Glu230 each coordinate 1-deoxy-D-xylulose 5-phosphate. Glu230 contributes to the Mn(2+) binding site.

Belongs to the DXR family. The cofactor is Mg(2+). Requires Mn(2+) as cofactor.

It catalyses the reaction 2-C-methyl-D-erythritol 4-phosphate + NADP(+) = 1-deoxy-D-xylulose 5-phosphate + NADPH + H(+). The protein operates within isoprenoid biosynthesis; isopentenyl diphosphate biosynthesis via DXP pathway; isopentenyl diphosphate from 1-deoxy-D-xylulose 5-phosphate: step 1/6. Its function is as follows. Catalyzes the NADPH-dependent rearrangement and reduction of 1-deoxy-D-xylulose-5-phosphate (DXP) to 2-C-methyl-D-erythritol 4-phosphate (MEP). The chain is 1-deoxy-D-xylulose 5-phosphate reductoisomerase from Shewanella loihica (strain ATCC BAA-1088 / PV-4).